Reading from the N-terminus, the 204-residue chain is Refilin-A (204 aa).

The tract at residues Met1 to Thr52 is disordered. Residues Asp12–Leu21 are compositionally biased toward basic and acidic residues. The segment covering Gly28–Pro38 has biased composition (pro residues). Arg151 is modified (asymmetric dimethylarginine).

It belongs to the Refilin family. Interacts with FLNA and FLNB. As to expression, detected in various tissues, with highest expression in lung, followed by spleen.

The protein resides in the cytoplasm. The protein localises to the cytoskeleton. In terms of biological role, involved in the regulation of the perinuclear actin network and nuclear shape through interaction with filamins. Plays an essential role in the formation of cartilaginous skeletal elements. This Mus musculus (Mouse) protein is Refilin-A (Rflna).